A 137-amino-acid chain; its full sequence is Putative nickel-responsive regulator (137 aa).

Ni(2+) contacts are provided by His-79, His-90, His-92, and Cys-98.

This sequence belongs to the transcriptional regulatory CopG/NikR family. Ni(2+) serves as cofactor.

In terms of biological role, transcriptional regulator. The protein is Putative nickel-responsive regulator of Campylobacter concisus (strain 13826).